Consider the following 1097-residue polypeptide: DNA-directed RNA polymerase subunit beta (1097 aa).

The disordered stretch occupies residues Q1072–D1097.

It belongs to the RNA polymerase beta chain family. In cyanobacteria the RNAP catalytic core is composed of 2 alpha, 1 beta, 1 beta', 1 gamma and 1 omega subunit. When a sigma factor is associated with the core the holoenzyme is formed, which can initiate transcription.

The enzyme catalyses RNA(n) + a ribonucleoside 5'-triphosphate = RNA(n+1) + diphosphate. In terms of biological role, DNA-dependent RNA polymerase catalyzes the transcription of DNA into RNA using the four ribonucleoside triphosphates as substrates. The sequence is that of DNA-directed RNA polymerase subunit beta from Synechococcus sp. (strain WH7803).